Consider the following 182-residue polypeptide: Probable RNA 2'-phosphotransferase (182 aa).

Belongs to the KptA/TPT1 family.

Functionally, removes the 2'-phosphate from RNA via an intermediate in which the phosphate is ADP-ribosylated by NAD followed by a presumed transesterification to release the RNA and generate ADP-ribose 1''-2''-cyclic phosphate (APPR&gt;P). May function as an ADP-ribosylase. The sequence is that of Probable RNA 2'-phosphotransferase from Acetivibrio thermocellus (strain ATCC 27405 / DSM 1237 / JCM 9322 / NBRC 103400 / NCIMB 10682 / NRRL B-4536 / VPI 7372) (Clostridium thermocellum).